The following is a 1027-amino-acid chain: 2-oxoglutarate dehydrogenase, mitochondrial (1027 aa).

Residues arginine 315, aspartate 413, asparagine 446, isoleucine 448, and glutamine 674 each coordinate thiamine diphosphate. Residues aspartate 413, asparagine 446, and isoleucine 448 each coordinate Mg(2+).

It belongs to the alpha-ketoglutarate dehydrogenase family. Homodimer. Component of the 2-oxoglutarate dehydrogenase complex. The cofactor is thiamine diphosphate. Mg(2+) is required as a cofactor.

Its subcellular location is the mitochondrion matrix. The enzyme catalyses N(6)-[(R)-lipoyl]-L-lysyl-[protein] + 2-oxoglutarate + H(+) = N(6)-[(R)-S(8)-succinyldihydrolipoyl]-L-lysyl-[protein] + CO2. In terms of biological role, the 2-oxoglutarate dehydrogenase complex catalyzes the overall conversion of 2-oxoglutarate to succinyl-CoA and CO(2). It contains multiple copies of three enzymatic components: 2-oxoglutarate dehydrogenase (E1), dihydrolipoamide succinyltransferase (E2) and lipoamide dehydrogenase (E3). The chain is 2-oxoglutarate dehydrogenase, mitochondrial (ogdh-1) from Caenorhabditis briggsae.